A 185-amino-acid polypeptide reads, in one-letter code: Lactoylglutathione lyase (185 aa).

A disordered region spans residues 1–21 (MASEAKESPANNPGLSTVRDE). Residues 27-174 (IMQQTMFRVK…DGYWIEIFDL (148 aa)) enclose the VOC domain. Substrate-binding residues include glutamine 30 and arginine 34. A Zn(2+)-binding site is contributed by glutamine 30. Position 96 (glutamate 96) interacts with Zn(2+). Residues asparagine 100, arginine 120, histidine 124, and 154-155 (KM) contribute to the substrate site. Zn(2+) is bound at residue histidine 124. Glutamate 170 serves as a coordination point for Zn(2+). Glutamate 170 serves as the catalytic Proton donor/acceptor.

The protein belongs to the glyoxalase I family. Zn(2+) serves as cofactor.

It catalyses the reaction (R)-S-lactoylglutathione = methylglyoxal + glutathione. The protein operates within secondary metabolite metabolism; methylglyoxal degradation; (R)-lactate from methylglyoxal: step 1/2. Catalyzes the conversion of hemimercaptal, formed from methylglyoxal and glutathione, to S-lactoylglutathione. The protein is Lactoylglutathione lyase (GLY I) of Brassica juncea (Indian mustard).